Reading from the N-terminus, the 527-residue chain is Glutamate--cysteine ligase (527 aa).

This sequence belongs to the glutamate--cysteine ligase type 1 family. Type 1 subfamily.

It catalyses the reaction L-cysteine + L-glutamate + ATP = gamma-L-glutamyl-L-cysteine + ADP + phosphate + H(+). The protein operates within sulfur metabolism; glutathione biosynthesis; glutathione from L-cysteine and L-glutamate: step 1/2. This is Glutamate--cysteine ligase from Pseudomonas aeruginosa (strain UCBPP-PA14).